The primary structure comprises 489 residues: Ribonuclease G (489 aa).

The 90-residue stretch at 39–128 (GNIYKGRVSR…LTTDITLPSR (90 aa)) folds into the S1 motif domain. Mg(2+) is bound by residues Asp-304 and Asp-347.

It belongs to the RNase E/G family. RNase G subfamily. Homodimer, and possible higher multimers. It depends on Mg(2+) as a cofactor.

The protein resides in the cytoplasm. Acts in the processing of the 5'-end of precursors of 16S rRNA. Confers adaptive resistance to aminoglycoside antibiotics through modulation of 16S rRNA processing. An endoribonuclease, it prefers 5'-monophosphorylated substrates and cleaves single-stranded sites rich in A and U residues; also contributes to 23S rRNA processing, tRNA processing and mRNA turnover. Involved in decay of speF mRNA, has a preference for adenine nucleotides. This is Ribonuclease G from Salmonella typhimurium (strain SL1344).